A 341-amino-acid polypeptide reads, in one-letter code: Follistatin (341 aa).

Residues 1-29 form the signal peptide; that stretch reads MLNERIQPGMIFLLTVSLCHFMEYRAVQA. The 74-residue stretch at 30-103 folds into the TB domain; the sequence is GNCWLQQSKN…TCENVDCGPG (74 aa). Disulfide bonds link C32-C55, C42-C88, C56-C91, C95-C106, C100-C116, C118-C150, C122-C143, and C132-C164. N72 carries N-linked (GlcNAc...) asparagine glycosylation. Residues 94–117 form the Follistatin-like 1 domain; the sequence is TCENVDCGPGKKCKMNKKNKPRCV. 3 consecutive Kazal-like domains span residues 100–166, 186–241, and 264–318; these read CGPG…KCKK, NAYC…KCIK, and RGRC…SCNS. N-linked (GlcNAc...) asparagine glycosylation is present at N124. The region spanning 167–190 is the Follistatin-like 2 domain; sequence TCRDVLCPGSSSCVVDQTNNAYCV. Cystine bridges form between C192–C225, C196–C218, and C207–C239. Residues 244–268 enclose the Follistatin-like 3 domain; the sequence is SCEDIQCSAGKKCLWDSRVGRGRCA. 3 cysteine pairs are disulfide-bonded: C270–C302, C274–C295, and C284–C316. N288 is a glycosylation site (N-linked (GlcNAc...) asparagine). Acidic residues predominate over residues 321 to 333; the sequence is EDTEEEEEEEEPD. Positions 321 to 341 are disordered; the sequence is EDTEEEEEEEEPDYSFVISSW.

As to quaternary structure, monomer. In terms of tissue distribution, spemann organizer and notochord.

The protein resides in the secreted. Functionally, binds directly to activin and functions as an activin antagonist which plays a role in neural induction. The short isoform is a more potent inhibitor of activin than the long isoform. Specific inhibitor of the biosynthesis and secretion of pituitary follicle stimulating hormone (FSH). The polypeptide is Follistatin (fst) (Xenopus laevis (African clawed frog)).